We begin with the raw amino-acid sequence, 350 residues long: Probable deoxyhypusine synthase (350 aa).

NAD(+) is bound by residues 96–100, 122–124, Glu-128, and Asp-229; these read SNLIS and TAG. 127–128 contributes to the spermidine binding site; that stretch reads EE. A spermidine-binding site is contributed by Asp-234. An NAD(+)-binding site is contributed by Gly-276. His-281 contacts spermidine. 301 to 302 contacts NAD(+); that stretch reads SA. Spermidine contacts are provided by residues 307–309 and 316–322; these read GSD and EAVSWGK. Lys-322 serves as the catalytic Nucleophile. 335–336 contributes to the NAD(+) binding site; the sequence is EV.

It belongs to the deoxyhypusine synthase family. NAD(+) serves as cofactor.

The catalysed reaction is [eIF5A protein]-L-lysine + spermidine = [eIF5A protein]-deoxyhypusine + propane-1,3-diamine. It functions in the pathway protein modification; eIF5A hypusination. In terms of biological role, catalyzes the NAD-dependent oxidative cleavage of spermidine and the subsequent transfer of the butylamine moiety of spermidine to the epsilon-amino group of a specific lysine residue of the eIF-5A precursor protein to form the intermediate deoxyhypusine residue. In Schizosaccharomyces pombe (strain 972 / ATCC 24843) (Fission yeast), this protein is Probable deoxyhypusine synthase.